We begin with the raw amino-acid sequence, 256 residues long: Proteasome subunit beta type-5 (256 aa).

Positions 1–55 are cleaved as a propeptide — removed in mature form; the sequence is CNMALADIVRLPPASEAPFAPLGAPRDLSGPPSKLAVRPWGGADLPGPGLQLLHG. Residue Thr56 is the Nucleophile of the active site.

The protein belongs to the peptidase T1B family. As to quaternary structure, the 26S proteasome consists of a 20S proteasome core and two 19S regulatory subunits. The 20S proteasome core is a barrel-shaped complex made of 28 subunits that are arranged in four stacked rings. The two outer rings are each formed by seven alpha subunits, and the two inner rings are formed by seven beta subunits. The proteolytic activity is exerted by three beta-subunits PSMB5, PSMB6 and PSMB7. Directly interacts with POMP. Interacts with ABCB1 and TAP1.

The protein resides in the cytoplasm. The protein localises to the nucleus. It carries out the reaction Cleavage of peptide bonds with very broad specificity.. Component of the 20S core proteasome complex involved in the proteolytic degradation of most intracellular proteins. This complex plays numerous essential roles within the cell by associating with different regulatory particles. Associated with two 19S regulatory particles, forms the 26S proteasome and thus participates in the ATP-dependent degradation of ubiquitinated proteins. The 26S proteasome plays a key role in the maintenance of protein homeostasis by removing misfolded or damaged proteins that could impair cellular functions, and by removing proteins whose functions are no longer required. Associated with the PA200 or PA28, the 20S proteasome mediates ubiquitin-independent protein degradation. This type of proteolysis is required in several pathways including spermatogenesis (20S-PA200 complex) or generation of a subset of MHC class I-presented antigenic peptides (20S-PA28 complex). Within the 20S core complex, PSMB5 displays a chymotrypsin-like activity. The sequence is that of Proteasome subunit beta type-5 (PSMB5) from Gallus gallus (Chicken).